Consider the following 73-residue polypeptide: UPF0235 protein PCC7424_0673 (73 aa).

The protein belongs to the UPF0235 family.

In Gloeothece citriformis (strain PCC 7424) (Cyanothece sp. (strain PCC 7424)), this protein is UPF0235 protein PCC7424_0673.